Consider the following 149-residue polypeptide: Large ribosomal subunit protein bL20m (149 aa).

Residues 1–9 constitute a mitochondrion transit peptide; sequence MVFLTTRLW.

This sequence belongs to the bacterial ribosomal protein bL20 family. As to quaternary structure, component of the mitochondrial ribosome large subunit (39S) which comprises a 16S rRNA and about 50 distinct proteins. Interacts with OXA1L.

The protein resides in the mitochondrion. This is Large ribosomal subunit protein bL20m (Mrpl20) from Mus musculus (Mouse).